Here is a 640-residue protein sequence, read N- to C-terminus: 1-deoxy-D-xylulose-5-phosphate synthase (640 aa).

Thiamine diphosphate-binding positions include His-72 and 113–115 (GHA). Asp-144 is a Mg(2+) binding site. Thiamine diphosphate is bound by residues 145-146 (GA), Asn-174, Tyr-287, and Glu-370. Residue Asn-174 participates in Mg(2+) binding.

It belongs to the transketolase family. DXPS subfamily. As to quaternary structure, homodimer. The cofactor is Mg(2+). Requires thiamine diphosphate as cofactor.

The catalysed reaction is D-glyceraldehyde 3-phosphate + pyruvate + H(+) = 1-deoxy-D-xylulose 5-phosphate + CO2. It participates in metabolic intermediate biosynthesis; 1-deoxy-D-xylulose 5-phosphate biosynthesis; 1-deoxy-D-xylulose 5-phosphate from D-glyceraldehyde 3-phosphate and pyruvate: step 1/1. Functionally, catalyzes the acyloin condensation reaction between C atoms 2 and 3 of pyruvate and glyceraldehyde 3-phosphate to yield 1-deoxy-D-xylulose-5-phosphate (DXP). The polypeptide is 1-deoxy-D-xylulose-5-phosphate synthase (Synechococcus sp. (strain RCC307)).